The primary structure comprises 148 residues: Large ribosomal subunit protein uL15 (148 aa).

Basic and acidic residues predominate over residues 1–11 (MSEPIKLHDLR). The segment at 1–52 (MSEPIKLHDLRPAAGSNKAKTRVGRGEASKGKTAGRGTKGTKARKQVSAAFE) is disordered.

The protein belongs to the universal ribosomal protein uL15 family. As to quaternary structure, part of the 50S ribosomal subunit.

Its function is as follows. Binds to the 23S rRNA. The sequence is that of Large ribosomal subunit protein uL15 from Corynebacterium glutamicum (strain R).